The following is a 427-amino-acid chain: Peptidase B (427 aa).

Residues Lys-195 and Asp-200 each coordinate Mn(2+). The active site involves Lys-207. Mn(2+)-binding residues include Asp-218, Asp-277, and Glu-279. Arg-281 is an active-site residue.

Belongs to the peptidase M17 family. As to quaternary structure, homohexamer. Mn(2+) is required as a cofactor.

The protein resides in the cytoplasm. It catalyses the reaction Release of an N-terminal amino acid, Xaa, from a peptide or arylamide. Xaa is preferably Glu or Asp but may be other amino acids, including Leu, Met, His, Cys and Gln.. Probably plays an important role in intracellular peptide degradation. The protein is Peptidase B of Salmonella agona (strain SL483).